A 273-amino-acid chain; its full sequence is Glucosamine-6-phosphate deaminase (273 aa).

The active-site Proton acceptor; for enolization step is the aspartate 72. Aspartate 141 serves as the catalytic For ring-opening step. Residue histidine 143 is the Proton acceptor; for ring-opening step of the active site. The active-site For ring-opening step is the glutamate 148.

This sequence belongs to the glucosamine/galactosamine-6-phosphate isomerase family. As to quaternary structure, homohexamer.

The protein localises to the cytoplasm. It catalyses the reaction alpha-D-glucosamine 6-phosphate + H2O = beta-D-fructose 6-phosphate + NH4(+). It participates in nucleotide-sugar biosynthesis; UDP-N-acetyl-alpha-D-glucosamine biosynthesis; alpha-D-glucosamine 6-phosphate from D-fructose 6-phosphate: step 1/1. Catalyzes the reversible conversion of alpha-D-glucosamine 6-phosphate (GlcN-6P) into beta-D-fructose 6-phosphate (Fru-6P) and ammonium ion, a regulatory reaction step in de novo uridine diphosphate-N-acetyl-alpha-D-glucosamine (UDP-GlcNAc) biosynthesis via hexosamine pathway. In Anopheles gambiae (African malaria mosquito), this protein is Glucosamine-6-phosphate deaminase (Gnpda1).